Consider the following 318-residue polypeptide: Glycerol 2-dehydrogenase (NADP(+)) (318 aa).

Tyr52 serves as the catalytic Proton donor. His115 contributes to the substrate binding site. NADP(+) is bound at residue 217-277; that stretch reads SPLGSQNQVP…SSTPSRIESN (61 aa).

Belongs to the aldo/keto reductase family.

It catalyses the reaction glycerol + NADP(+) = dihydroxyacetone + NADPH + H(+). Its function is as follows. Glycerol oxidoreductase probably involved in glycerol synthesis. This chain is Glycerol 2-dehydrogenase (NADP(+)) (gld2), found in Hypocrea jecorina (Trichoderma reesei).